Consider the following 343-residue polypeptide: Uroporphyrinogen decarboxylase (343 aa).

Substrate-binding positions include 23–27, Asp73, Tyr150, Ser205, and His322; that span reads RQAGR.

This sequence belongs to the uroporphyrinogen decarboxylase family. As to quaternary structure, homodimer.

The protein localises to the cytoplasm. The catalysed reaction is uroporphyrinogen III + 4 H(+) = coproporphyrinogen III + 4 CO2. Its pathway is porphyrin-containing compound metabolism; protoporphyrin-IX biosynthesis; coproporphyrinogen-III from 5-aminolevulinate: step 4/4. Catalyzes the decarboxylation of four acetate groups of uroporphyrinogen-III to yield coproporphyrinogen-III. The polypeptide is Uroporphyrinogen decarboxylase (Cereibacter sphaeroides (strain ATCC 17025 / ATH 2.4.3) (Rhodobacter sphaeroides)).